The chain runs to 76 residues: Probable 26S proteasome complex subunit dss-1 (76 aa).

Disordered stretches follow at residues 1–28 (MSSTTVTKKDQKTVVEKKETEEEEFEEF) and 52–76 (DDETHESEFSKQLKEELRKGGHPIA). 2 stretches are compositionally biased toward basic and acidic residues: residues 7 to 20 (TKKDQKTVVEKKET) and 57 to 70 (ESEFSKQLKEELRK).

It belongs to the DSS1/SEM1 family. In terms of assembly, part of the 26S proteasome.

The protein localises to the nucleus. Its subcellular location is the cytoplasm. Functionally, subunit of the 26S proteasome which plays a role in ubiquitin-dependent proteolysis. Has an essential role in oogenesis and larval growth. Required for intestinal function and default lifespan. The chain is Probable 26S proteasome complex subunit dss-1 from Caenorhabditis briggsae.